Here is a 163-residue protein sequence, read N- to C-terminus: Peptide deformylase 3 (163 aa).

Residues Cys-91 and His-133 each coordinate Fe cation. Residue Glu-134 is part of the active site. His-137 contributes to the Fe cation binding site.

It belongs to the polypeptide deformylase family. Fe(2+) serves as cofactor.

The catalysed reaction is N-terminal N-formyl-L-methionyl-[peptide] + H2O = N-terminal L-methionyl-[peptide] + formate. Removes the formyl group from the N-terminal Met of newly synthesized proteins. Requires at least a dipeptide for an efficient rate of reaction. N-terminal L-methionine is a prerequisite for activity but the enzyme has broad specificity at other positions. The sequence is that of Peptide deformylase 3 from Shewanella oneidensis (strain ATCC 700550 / JCM 31522 / CIP 106686 / LMG 19005 / NCIMB 14063 / MR-1).